The sequence spans 503 residues: MSKLSDNHSSASEGEKEAGDLESGPTAISSEPSFDDADRDPNLITWDGPKDPENPKNWPKGLRWKNTWTVSLFVFISPVSSSMIAPAMSDLAKSLGMHAEIEIYLSLSIFILAYSIGPIFFGPASELYGRVRLLQISNVWYLAWNLGCGFATTKGQLFAFRFLAGIGGSAPLAIGGGAISDMWTAEERGKAMGVYTLGPLLGPVVGPIAGGFIAEYSTWRWVFWSTSAAALAVQVVGFFWLQECHPGTLLRKRRDRLAKETGNENLHTAEKVETLGYKLLHAFERPVKMFTTQPIVFCMAIYMAYLFGISYLMFATFPEIWTVVYHESPGIGGLNYLSIAIGSFIGLFFNLKLVDRIYRSLKARNNGVGKPEYRMPSLAVGSVISTIGLFWYGWSIGNTHWIMPNIGALIFAMGTISCLQGMQTYIVDSYQTYAASAMAACAVLRSLCGFGFPLFAPYMYNSLGYGWGTSLLAFITMVVGWGAPFAFWHFGPRLRAMSKYASG.

A disordered region spans residues 1–59; sequence MSKLSDNHSSASEGEKEAGDLESGPTAISSEPSFDDADRDPNLITWDGPKDPENPKNWP. Asparagine 7 carries N-linked (GlcNAc...) asparagine glycosylation. Transmembrane regions (helical) follow at residues 68–88, 101–121, 133–153, 162–182, 194–214, 221–241, 295–315, 329–349, 377–397, 401–421, 432–454, and 471–491; these read WTVS…APAM, IEIY…PIFF, LLQI…FATT, FLAG…ISDM, VYTL…GFIA, WVFW…FFWL, IVFC…LMFA, PGIG…GLFF, SLAV…WSIG, WIMP…CLQG, TYAA…GFPL, and LLAF…WHFG.

This sequence belongs to the major facilitator superfamily.

The protein resides in the membrane. Functionally, efflux pump; part of the gene cluster that mediates the biosynthesis of viridicatumtoxin, a tetracycline-like fungal meroterpenoid with a unique, fused spirobicyclic ring system. The chain is Efflux pump vrtL from Penicillium aethiopicum.